Here is a 437-residue protein sequence, read N- to C-terminus: MNNNIVAIVGRPNVGKSTLFNRLIQRREAIVDSVSGVTRDRNYGKSEWNGKEFSVIDTGGYVRGSDDVFEGEIRKQVELAIDEADVIIFVVDVEEGITPMDETVAKLLRKVTKPVLLAVNKVDNAMREKDAIEFYNLGLGDYYTFASISGSGTGDLLDALIDAFPEKPEPAEAAEELPRFAVVGRPNAGKSSFINALIGQDRYIVTDIAGTTRDAIDTKFDRFGFEFNLVDTAGIRRKAKVKEDLEFYSVMRSVRAIEHADVCILVIDATRGFEGQDQSIFWLAEKNRKGVVILVNKWDLVEKDTMSSRDYEEKIRKELMPFTDVPILFVSALTKQRLLKALEATVQVFENRKQRISTSKFNEYMLKVIEAYPPPAMKGKYVKIKYCMQLPTQTPQFVFFANLPQYVKEPYKRYLENKIRDNWDFAGVPIDIYIREK.

EngA-type G domains are found at residues 4 to 168 and 178 to 353; these read NIVA…PEKP and PRFA…ENRK. GTP contacts are provided by residues 10-17, 57-61, 120-123, 184-191, 231-235, and 296-299; these read GRPNVGKS, DTGGY, NKVD, GRPNAGKS, DTAGI, and NKWD. The KH-like domain maps to 354 to 437; the sequence is QRISTSKFNE…VPIDIYIREK (84 aa).

This sequence belongs to the TRAFAC class TrmE-Era-EngA-EngB-Septin-like GTPase superfamily. EngA (Der) GTPase family. As to quaternary structure, associates with the 50S ribosomal subunit.

In terms of biological role, GTPase that plays an essential role in the late steps of ribosome biogenesis. This is GTPase Der from Flavobacterium johnsoniae (strain ATCC 17061 / DSM 2064 / JCM 8514 / BCRC 14874 / CCUG 350202 / NBRC 14942 / NCIMB 11054 / UW101) (Cytophaga johnsonae).